The following is a 352-amino-acid chain: Phenylalanine--tRNA ligase alpha subunit (352 aa).

Glu-258 contacts Mg(2+).

Belongs to the class-II aminoacyl-tRNA synthetase family. Phe-tRNA synthetase alpha subunit type 1 subfamily. In terms of assembly, tetramer of two alpha and two beta subunits. Mg(2+) is required as a cofactor.

The protein resides in the cytoplasm. It catalyses the reaction tRNA(Phe) + L-phenylalanine + ATP = L-phenylalanyl-tRNA(Phe) + AMP + diphosphate + H(+). In Staphylococcus saprophyticus subsp. saprophyticus (strain ATCC 15305 / DSM 20229 / NCIMB 8711 / NCTC 7292 / S-41), this protein is Phenylalanine--tRNA ligase alpha subunit.